The following is a 330-amino-acid chain: G-protein coupled receptor 3 (330 aa).

The Extracellular portion of the chain corresponds to 1–42 (MMWGAGSPLAWLSAGSGNVNVSSVGPAEGPTGPAAPLPSPKA). Asn20 is a glycosylation site (N-linked (GlcNAc...) asparagine). The chain crosses the membrane as a helical span at residues 43–62 (WDVVLCISGTLVSCENALVV). Topologically, residues 63-74 (AIIVGTPAFRAP) are cytoplasmic. Residues 75 to 98 (MFLLVGSLAVADLLAGLGLVLHFA) traverse the membrane as a helical segment. Residues 99–110 (AVFCIGSAEMSL) lie on the Extracellular side of the membrane. Residues 111-132 (VLVGVLAMAFTASIGSLLAITV) form a helical membrane-spanning segment. Residues 133-153 (DRYLSLYNALTYYSETTVTRT) are Cytoplasmic-facing. A helical membrane pass occupies residues 154–173 (YVMLALVWGGALGLGLLPVL). Residues 174–198 (AWNCLDGLTTCGVVYPLSKNHLVVL) are Extracellular-facing. The chain crosses the membrane as a helical span at residues 199-217 (AIAFFMVFGIMLQLYAQIC). At 218–245 (RIVCRHAQQIALQRHLLPASHYVATRKG) the chain is on the cytoplasmic side. Residues 246 to 272 (IATLAVVLGAFAACWLPFTVYCLLGDA) traverse the membrane as a helical segment. Over 273-277 (HSPPL) the chain is Extracellular. A helical membrane pass occupies residues 278-299 (YTYLTLLPATYNSMINPIIYAF). Residues 300-330 (RNQDVQKVLWAVCCCCSSSKIPFRSRSPSDV) are Cytoplasmic-facing. Cys313 carries S-palmitoyl cysteine lipidation. Phosphoserine occurs at positions 324, 326, and 328.

It belongs to the G-protein coupled receptor 1 family. As to expression, expressed predominantly in the central nervous system, and at low levels in the lung, kidney, testis, ovary and eye. Highly expressed in regions of the brain implicated in the Alzheimer disease.

Its subcellular location is the cell membrane. In terms of biological role, constitutively active G-protein coupled receptor that maintains high 3'-5'-cyclic adenosine monophosphate (cAMP) levels that a plays a role in serveral processes including meiotic arrest in oocytes or neuronal development via activation of numerous intracellular signaling pathways. Acts as an essential activator of thermogenic adipocytes and drives thermogenesis via its intrinsic G(s)-coupling activity without the requirement of a ligand. Has a potential role in modulating a number of brain functions, including behavioral responses to stress, amyloid-beta peptide generation in neurons. Stimulates neurite outgrowth in cerebellar granular neurons modulated via PKA, ERK, and most strongly PI3K-mediated signaling pathways. The sequence is that of G-protein coupled receptor 3 (GPR3) from Homo sapiens (Human).